A 716-amino-acid chain; its full sequence is Beta-galactosidase (716 aa).

Catalysis depends on Glu-389, which acts as the Proton donor. Glu-462 serves as the catalytic Nucleophile.

This sequence belongs to the glycosyl hydrolase 2 family. As to quaternary structure, homodimer.

The catalysed reaction is Hydrolysis of terminal non-reducing beta-D-galactose residues in beta-D-galactosides.. Its function is as follows. Displays beta-galactosidase activity with the artificial chromogenic substrate o-nitrophenyl-beta-D-galactopyranoside (ONPG). The protein is Beta-galactosidase of Thermoanaerobacterium thermosulfurigenes (Clostridium thermosulfurogenes).